A 365-amino-acid chain; its full sequence is Membrane-bound lytic murein transglycosylase C (365 aa).

Residues 1 to 19 form the signal peptide; sequence MKKYTKYLPLLLIIPFLAA. C20 carries the N-palmitoyl cysteine lipid modification. The S-diacylglycerol cysteine moiety is linked to residue C20.

The protein belongs to the transglycosylase Slt family.

It is found in the cell outer membrane. The enzyme catalyses Exolytic cleavage of the (1-&gt;4)-beta-glycosidic linkage between N-acetylmuramic acid (MurNAc) and N-acetylglucosamine (GlcNAc) residues in peptidoglycan, from either the reducing or the non-reducing ends of the peptidoglycan chains, with concomitant formation of a 1,6-anhydrobond in the MurNAc residue.. Functionally, murein-degrading enzyme. May play a role in recycling of muropeptides during cell elongation and/or cell division. This Actinobacillus pleuropneumoniae serotype 5b (strain L20) protein is Membrane-bound lytic murein transglycosylase C.